The following is a 187-amino-acid chain: MKHHSLIFLTGFSGSGKSTIGPLLANSLGFEFIDLDREIELAAGKSINRIFAEDGEAAFRELELRTLERIGSQKEMVVSLGGGVLENDRCFELIRRTGTLVYMKSSPEILSLRLQHKTDRPLLKGPNGEKLSREQVEQRISEILEKREPRYQKADLIIVTDSKKIGSTVEEMTRKIERHIRRVERDS.

Residue 14-19 (GSGKST) coordinates ATP. S18 provides a ligand contact to Mg(2+). Residues D36, R60, and G82 each coordinate substrate. R120 provides a ligand contact to ATP. R147 is a binding site for substrate.

This sequence belongs to the shikimate kinase family. As to quaternary structure, monomer. Mg(2+) serves as cofactor.

The protein localises to the cytoplasm. It catalyses the reaction shikimate + ATP = 3-phosphoshikimate + ADP + H(+). It functions in the pathway metabolic intermediate biosynthesis; chorismate biosynthesis; chorismate from D-erythrose 4-phosphate and phosphoenolpyruvate: step 5/7. Catalyzes the specific phosphorylation of the 3-hydroxyl group of shikimic acid using ATP as a cosubstrate. The chain is Shikimate kinase from Chlorobaculum parvum (strain DSM 263 / NCIMB 8327) (Chlorobium vibrioforme subsp. thiosulfatophilum).